A 63-amino-acid chain; its full sequence is Translational regulator CsrA (63 aa).

Belongs to the CsrA/RsmA family. As to quaternary structure, homodimer; the beta-strands of each monomer intercalate to form a hydrophobic core, while the alpha-helices form wings that extend away from the core.

The protein resides in the cytoplasm. Its function is as follows. A key translational regulator that binds mRNA to regulate translation initiation and/or mRNA stability. Mediates global changes in gene expression, shifting from rapid growth to stress survival by linking envelope stress, the stringent response and the catabolite repression systems. Usually binds in the 5'-UTR; binding at or near the Shine-Dalgarno sequence prevents ribosome-binding, repressing translation, binding elsewhere in the 5'-UTR can activate translation and/or stabilize the mRNA. Its function is antagonized by small RNA(s). The polypeptide is Translational regulator CsrA (Haemophilus influenzae (strain PittEE)).